We begin with the raw amino-acid sequence, 504 residues long: ATP synthase subunit alpha (504 aa).

172-179 contributes to the ATP binding site; the sequence is GDRQTGKT.

It belongs to the ATPase alpha/beta chains family. As to quaternary structure, F-type ATPases have 2 components, CF(1) - the catalytic core - and CF(0) - the membrane proton channel. CF(1) has five subunits: alpha(3), beta(3), gamma(1), delta(1), epsilon(1). CF(0) has three main subunits: a(1), b(2) and c(9-12). The alpha and beta chains form an alternating ring which encloses part of the gamma chain. CF(1) is attached to CF(0) by a central stalk formed by the gamma and epsilon chains, while a peripheral stalk is formed by the delta and b chains.

It localises to the cell inner membrane. It catalyses the reaction ATP + H2O + 4 H(+)(in) = ADP + phosphate + 5 H(+)(out). In terms of biological role, produces ATP from ADP in the presence of a proton gradient across the membrane. The alpha chain is a regulatory subunit. The chain is ATP synthase subunit alpha from Petrotoga mobilis (strain DSM 10674 / SJ95).